A 440-amino-acid polypeptide reads, in one-letter code: NADH-quinone oxidoreductase subunit H (440 aa).

A run of 9 helical transmembrane segments spans residues 11–31 (VWLIIVKVVILFVILLAWTIF), 83–103 (IVFNLAPVIAGIACFASWSVI), 123–143 (VPVAVLFILAVASIGIYGVVL), 164–184 (MISYEVAMGLSLVTVFIFSGS), 207–227 (IAGHYWLLLIPSFVIYVITMF), 261–281 (FLAEYINMATLSAVCTTLFLG), 299–319 (WWGLLWFFLKTQLVIFFFVWV), 331–351 (FMDLGWKVLIPVSLGWVLLVA), and 366–386 (VFLVVVGVILVALIVWAFMGG).

It belongs to the complex I subunit 1 family. As to quaternary structure, NDH-1 is composed of 14 different subunits. Subunits NuoA, H, J, K, L, M, N constitute the membrane sector of the complex.

Its subcellular location is the cell membrane. The enzyme catalyses a quinone + NADH + 5 H(+)(in) = a quinol + NAD(+) + 4 H(+)(out). Functionally, NDH-1 shuttles electrons from NADH, via FMN and iron-sulfur (Fe-S) centers, to quinones in the respiratory chain. The immediate electron acceptor for the enzyme in this species is believed to be ubiquinone. Couples the redox reaction to proton translocation (for every two electrons transferred, four hydrogen ions are translocated across the cytoplasmic membrane), and thus conserves the redox energy in a proton gradient. This subunit may bind ubiquinone. This is NADH-quinone oxidoreductase subunit H from Cutibacterium acnes (strain DSM 16379 / KPA171202) (Propionibacterium acnes).